The following is a 1036-amino-acid chain: ADAMTS-like protein 4 (1036 aa).

The signal sequence occupies residues 1 to 24 (MESWLGRLWLCMMLLLPLPQPCQD). The TSP type-1 1 domain maps to 47 to 91 (GPWGRWASCSQPCGVGVQRRSRTCELHPALPLPPRPPRHPEAHRP). 2 disordered regions span residues 73–149 (HPAL…IKPG) and 163–308 (HRSR…WLPL). Residues 163–173 (HRSRRHPHRPG) show a composition bias toward basic residues. The segment covering 215 to 253 (TPRSGTAQTEVLPRTSSAPSYTGTPAPTSSFGDSRSFQG) has biased composition (polar residues). Asn454 and Asn737 each carry an N-linked (GlcNAc...) asparagine glycan. 5 TSP type-1 domains span residues 687-748 (CPPY…HLCG), 750-804 (WEIS…DMGP), 805-871 (CTTA…GPCE), 872-931 (RTWR…QGQA), and 932-988 (CEDK…QPCN). The PLAC domain occupies 991–1028 (PDDQCKDSSPHCPLVVQARLCVYPYYTTTCCRSCAHVL).

Interacts with CTSB. Interacts with FBN1. In terms of processing, glycosylated. Can be O-fucosylated by POFUT2 on a serine or a threonine residue found within the consensus sequence C1-X(2)-(S/T)-C2-G of the TSP type-1 repeat domains where C1 and C2 are the first and second cysteine residue of the repeat, respectively. Fucosylated repeats can then be further glycosylated by the addition of a beta-1,3-glucose residue by the glucosyltransferase, B3GALTL. Fucosylation mediates the efficient secretion of ADAMTS family members. Can also be C-glycosylated with one or two mannose molecules on tryptophan residues within the consensus sequence W-X-X-W of the TPRs, and N-glycosylated. These other glycosylations can also facilitate secretion. Widely expressed in a range of tissues. Especially prevalent in brain, spinal cord, muscle, lung and heart.

It is found in the secreted. The protein localises to the extracellular space. It localises to the extracellular matrix. Its function is as follows. Positive regulation of apoptosis. May facilitate FBN1 microfibril biogenesis. This Mus musculus (Mouse) protein is ADAMTS-like protein 4.